The sequence spans 150 residues: MDDLSRRLLARYQKGLPICAEPYRRMAETLGCSEAEVLERLRRLEADGALSRVGPVLRHQRAGASTLAALAVPEERLQRVAERISQYAEVNHNYQREHRYNLWFVLTAGDRAQLDRVLAEIAADTGLQPLDLPMQEAYCIDLAFPLEASR.

It belongs to the Ahb/Nir family. In terms of assembly, probably forms a complex composed of NirD, NirL, NirG and NirH. All proteins are required for the total conversion of siroheme to didecarboxysiroheme.

The enzyme catalyses siroheme + 2 H(+) = 12,18-didecarboxysiroheme + 2 CO2. The protein operates within porphyrin-containing compound metabolism. Functionally, involved in heme d1 biosynthesis. Catalyzes the decarboxylation of siroheme into didecarboxysiroheme. This is Siroheme decarboxylase NirD subunit from Pseudomonas aeruginosa (strain ATCC 15692 / DSM 22644 / CIP 104116 / JCM 14847 / LMG 12228 / 1C / PRS 101 / PAO1).